The chain runs to 197 residues: Holliday junction resolvase RecU (197 aa).

The disordered stretch occupies residues 1 to 21 (MVNYPSGVRAGGYPQKKKNQN). Positions 82, 84, 97, and 116 each coordinate Mg(2+).

The protein belongs to the RecU family. Mg(2+) serves as cofactor.

Its subcellular location is the cytoplasm. It carries out the reaction Endonucleolytic cleavage at a junction such as a reciprocal single-stranded crossover between two homologous DNA duplexes (Holliday junction).. Functionally, endonuclease that resolves Holliday junction intermediates in genetic recombination. Cleaves mobile four-strand junctions by introducing symmetrical nicks in paired strands. Promotes annealing of linear ssDNA with homologous dsDNA. Required for DNA repair, homologous recombination and chromosome segregation. This is Holliday junction resolvase RecU from Oenococcus oeni (strain ATCC BAA-331 / PSU-1).